The sequence spans 158 residues: Regulator of sigma D (158 aa).

This sequence belongs to the Rsd/AlgQ family. Interacts with RpoD.

The protein resides in the cytoplasm. Functionally, binds RpoD and negatively regulates RpoD-mediated transcription activation by preventing the interaction between the primary sigma factor RpoD with the catalytic core of the RNA polymerase and with promoter DNA. May be involved in replacement of the RNA polymerase sigma subunit from RpoD to RpoS during the transition from exponential growth to the stationary phase. The protein is Regulator of sigma D of Shigella boydii serotype 4 (strain Sb227).